The sequence spans 310 residues: Ribosomal protein L11 methyltransferase (310 aa).

S-adenosyl-L-methionine-binding residues include T153, G174, D196, and N239.

The protein belongs to the methyltransferase superfamily. PrmA family.

The protein resides in the cytoplasm. The enzyme catalyses L-lysyl-[protein] + 3 S-adenosyl-L-methionine = N(6),N(6),N(6)-trimethyl-L-lysyl-[protein] + 3 S-adenosyl-L-homocysteine + 3 H(+). Functionally, methylates ribosomal protein L11. The polypeptide is Ribosomal protein L11 methyltransferase (Janthinobacterium sp. (strain Marseille) (Minibacterium massiliensis)).